Consider the following 229-residue polypeptide: Type III pantothenate kinase (229 aa).

7–14 provides a ligand contact to ATP; the sequence is DVGNSSVD. Substrate contacts are provided by residues Tyr-78 and 85–88; that span reads GTDR. Asp-87 functions as the Proton acceptor in the catalytic mechanism. Residue Thr-110 coordinates ATP. Thr-161 is a substrate binding site.

The protein belongs to the type III pantothenate kinase family. In terms of assembly, homodimer. The cofactor is NH4(+). K(+) is required as a cofactor.

The protein resides in the cytoplasm. It catalyses the reaction (R)-pantothenate + ATP = (R)-4'-phosphopantothenate + ADP + H(+). It functions in the pathway cofactor biosynthesis; coenzyme A biosynthesis; CoA from (R)-pantothenate: step 1/5. Its function is as follows. Catalyzes the phosphorylation of pantothenate (Pan), the first step in CoA biosynthesis. This chain is Type III pantothenate kinase, found in Aquifex aeolicus (strain VF5).